Consider the following 480-residue polypeptide: Aspartyl/glutamyl-tRNA(Asn/Gln) amidotransferase subunit B (480 aa).

It belongs to the GatB/GatE family. GatB subfamily. Heterotrimer of A, B and C subunits.

The enzyme catalyses L-glutamyl-tRNA(Gln) + L-glutamine + ATP + H2O = L-glutaminyl-tRNA(Gln) + L-glutamate + ADP + phosphate + H(+). The catalysed reaction is L-aspartyl-tRNA(Asn) + L-glutamine + ATP + H2O = L-asparaginyl-tRNA(Asn) + L-glutamate + ADP + phosphate + 2 H(+). Functionally, allows the formation of correctly charged Asn-tRNA(Asn) or Gln-tRNA(Gln) through the transamidation of misacylated Asp-tRNA(Asn) or Glu-tRNA(Gln) in organisms which lack either or both of asparaginyl-tRNA or glutaminyl-tRNA synthetases. The reaction takes place in the presence of glutamine and ATP through an activated phospho-Asp-tRNA(Asn) or phospho-Glu-tRNA(Gln). The protein is Aspartyl/glutamyl-tRNA(Asn/Gln) amidotransferase subunit B of Hahella chejuensis (strain KCTC 2396).